The sequence spans 309 residues: Porphobilinogen deaminase (309 aa).

C244 carries the S-(dipyrrolylmethanemethyl)cysteine modification.

It belongs to the HMBS family. In terms of assembly, monomer. Requires dipyrromethane as cofactor.

The enzyme catalyses 4 porphobilinogen + H2O = hydroxymethylbilane + 4 NH4(+). The protein operates within porphyrin-containing compound metabolism; protoporphyrin-IX biosynthesis; coproporphyrinogen-III from 5-aminolevulinate: step 2/4. In terms of biological role, tetrapolymerization of the monopyrrole PBG into the hydroxymethylbilane pre-uroporphyrinogen in several discrete steps. This chain is Porphobilinogen deaminase, found in Listeria monocytogenes serovar 1/2a (strain ATCC BAA-679 / EGD-e).